The primary structure comprises 308 residues: tRNA dimethylallyltransferase (308 aa).

10-17 (GPTASGKT) contacts ATP. A substrate-binding site is contributed by 12 to 17 (TASGKT). Interaction with substrate tRNA stretches follow at residues 35 to 38 (DSSL) and 159 to 163 (QRIFR).

This sequence belongs to the IPP transferase family. Monomer. The cofactor is Mg(2+).

The enzyme catalyses adenosine(37) in tRNA + dimethylallyl diphosphate = N(6)-dimethylallyladenosine(37) in tRNA + diphosphate. Its function is as follows. Catalyzes the transfer of a dimethylallyl group onto the adenine at position 37 in tRNAs that read codons beginning with uridine, leading to the formation of N6-(dimethylallyl)adenosine (i(6)A). This is tRNA dimethylallyltransferase from Francisella tularensis subsp. tularensis (strain FSC 198).